The following is a 1069-amino-acid chain: Cellulose synthase A catalytic subunit 5 [UDP-forming] (1069 aa).

Residue Met1 is modified to N-acetylmethionine. The Cytoplasmic segment spans residues 1–265 (MNTGGRLIAG…KSSKINPYRM (265 aa)). Zn(2+) contacts are provided by Cys39, Cys42, Cys58, Cys61, Cys66, Cys69, Cys81, and Cys84. The segment at 39-85 (CQICGDEIELSVDGESFVACNECAFPVCRPCYEYERREGNQSCPQCK) adopts an RING-type; degenerate zinc-finger fold. Ser229 and Ser230 each carry phosphoserine. The chain crosses the membrane as a helical span at residues 266–286 (LIVLRLVILGLFFHYRILHPV). Residues 287-288 (ND) lie on the Extracellular side of the membrane. The chain crosses the membrane as a helical span at residues 289-309 (AYALWLISVICEIWFAVSWVL). Residues 310 to 853 (DQFPKWYPIE…INSVVYPWTS (544 aa)) lie on the Cytoplasmic side of the membrane. Residues Ser348, Lys354, Glu355, and Asp384 each contribute to the UDP-alpha-D-glucose site. The active site involves Asp384. Residues 438 to 464 (VRERRAMKRDYEEFKVKINALVATAQK) adopt a coiled-coil conformation. Lys525 is a binding site for UDP-alpha-D-glucose. The Mn(2+) site is built by Lys526 and Asp550. Asp770 is an active-site residue. Residues 854–874 (IPLLVYCSLPAICLLTGKFIV) traverse the membrane as a helical segment. The Extracellular portion of the chain corresponds to 875 to 879 (PEISN). A helical transmembrane segment spans residues 880-900 (YASILFMALFGSIAVTGILEM). The Cytoplasmic segment spans residues 901–915 (QWGKVGIDDWWRNEQ). Residues 916–936 (FWVIGGVSAHLFALFQGLLKV) form a helical membrane-spanning segment. The Extracellular portion of the chain corresponds to 937-965 (LAGVETNFTVTSKAADDGEFSELYIFKWT). An N-linked (GlcNAc...) asparagine glycan is attached at Asn943. The chain crosses the membrane as a helical span at residues 966-986 (SLLIPPTTLLIINVIGVIVGI). Residues 987–997 (SDAISNGYDSW) lie on the Cytoplasmic side of the membrane. Residues 998–1018 (GPLFGRLFFAFWVILHLYPFL) form a helical membrane-spanning segment. Topologically, residues 1019–1027 (KGLLGKQDR) are extracellular. Residues 1028 to 1048 (MPTIILVWSILLASILTLLWV) form a helical membrane-spanning segment. The Cytoplasmic portion of the chain corresponds to 1049–1069 (RVNPFVAKGGPILEICGLDCL).

Belongs to the glycosyltransferase 2 family. Plant cellulose synthase subfamily. Zn(2+) serves as cofactor. Requires Mn(2+) as cofactor. As to expression, expressed in young plants, stems and flowers.

The protein resides in the cell membrane. The enzyme catalyses [(1-&gt;4)-beta-D-glucosyl](n) + UDP-alpha-D-glucose = [(1-&gt;4)-beta-D-glucosyl](n+1) + UDP + H(+). Its pathway is glycan metabolism; plant cellulose biosynthesis. In terms of biological role, catalytic subunit of cellulose synthase terminal complexes ('rosettes'), required for beta-1,4-glucan microfibril crystallization, a major mechanism of the cell wall formation. In Arabidopsis thaliana (Mouse-ear cress), this protein is Cellulose synthase A catalytic subunit 5 [UDP-forming].